The sequence spans 191 residues: Guanylate kinase (191 aa).

The Guanylate kinase-like domain maps to 8–188 (GRLVVLAGPS…AVSDIKEILV (181 aa)). Position 15-22 (15-22 (GPSAVGKS)) interacts with ATP.

The protein belongs to the guanylate kinase family.

The protein resides in the cytoplasm. It catalyses the reaction GMP + ATP = GDP + ADP. Essential for recycling GMP and indirectly, cGMP. This chain is Guanylate kinase, found in Corynebacterium diphtheriae (strain ATCC 700971 / NCTC 13129 / Biotype gravis).